A 674-amino-acid chain; its full sequence is Transcription activator of gluconeogenesis PMAA_028970 (674 aa).

A disordered region spans residues 1-46; that stretch reads MMDTDKDDLPSATDHSEHESGDAVKVEGGASKTASNSKDPSRPRRK. Over residues 14-25 the composition is skewed to basic and acidic residues; it reads DHSEHESGDAVK. Residues 52 to 80 constitute a DNA-binding region (zn(2)-C6 fungal-type); the sequence is CFACQRAHLTCGDERPCQRCIKRGLQDAC. 4 disordered regions span residues 117-181, 250-321, 344-374, and 519-557; these read ISPT…ATPA, TGAG…SGLY, IGSN…SPMK, and NLNV…PGPN. A compositionally biased stretch (polar residues) spans 120–148; it reads TEYTQNGTNNAQQQQQKSGTIYASSTPSY. A compositionally biased stretch (low complexity) spans 149–163; it reads NNNNGTFDTNNATNT. Polar residues-rich tracts occupy residues 269–278 and 285–294; these read GQRSNSQQFG and TTESPSQQSF. 2 stretches are compositionally biased toward low complexity: residues 348–366 and 529–540; these read TFAS…IAPS and NTSSQSDSTSSS.

This sequence belongs to the ERT1/acuK family.

Its subcellular location is the nucleus. In terms of biological role, transcription factor which regulates nonfermentable carbon utilization. Activator of gluconeogenetic genes. In Talaromyces marneffei (strain ATCC 18224 / CBS 334.59 / QM 7333) (Penicillium marneffei), this protein is Transcription activator of gluconeogenesis PMAA_028970.